The following is a 1088-amino-acid chain: Platelet-derived growth factor receptor alpha (1088 aa).

The signal sequence occupies residues 1–23; the sequence is MGTSQAFLVLSCLLTGPSLIVCQ. Ig-like C2-type domains lie at 24–112, 116–200, 201–305, 318–409, and 413–516; these read LLLP…SEIE, IYIY…FKTS, EFNV…KTVT, PTFG…FELS, and PASI…LKLV. The Extracellular portion of the chain corresponds to 24 to 527; that stretch reads LLLPSILPNE…PSLRSELTVA (504 aa). An intrachain disulfide couples Cys48 to Cys99. N-linked (GlcNAc...) asparagine glycosylation is found at Asn75, Asn102, and Asn178. Cystine bridges form between Cys149–Cys188 and Cys234–Cys289. N-linked (GlcNAc...) asparagine glycosylation is found at Asn352, Asn358, Asn457, and Asn467. The cysteines at positions 434 and 500 are disulfide-linked. The helical transmembrane segment at 528–548 threads the bilayer; that stretch reads AAVLVLLVIVIVSLIVLVVIW. At 549–1088 the chain is on the cytoplasmic side; that stretch reads KQKPRYEIRW…SSDLVEDSFL (540 aa). Tyr571 and Tyr573 each carry phosphotyrosine; by autocatalysis. One can recognise a Protein kinase domain in the interval 592 to 953; the sequence is LVLGRILGSG…HLSEIVENLL (362 aa). Residues 598–606 and Lys626 each bind ATP; that span reads LGSGAFGKV. Tyr719, Tyr730, Tyr741, Tyr753, Tyr761, and Tyr767 each carry phosphotyrosine; by autocatalysis. Asp817 serves as the catalytic Proton acceptor. Tyr848, Tyr987, and Tyr1017 each carry phosphotyrosine; by autocatalysis. Positions 1017-1088 are disordered; sequence YIIPLPDIDP…SSDLVEDSFL (72 aa). The span at 1040–1058 shows a compositional bias: polar residues; the sequence is SSQTSEESAIETGSSSSTF. Residues 1064-1088 are compositionally biased toward acidic residues; the sequence is ETIEDIDMMDDIGIDSSDLVEDSFL.

It belongs to the protein kinase superfamily. Tyr protein kinase family. CSF-1/PDGF receptor subfamily. In terms of assembly, interacts with homodimeric PDGFA, PDGFB and PDGFC, and with heterodimers formed by PDGFA and PDGFB. Monomer in the absence of bound ligand. Interaction with dimeric PDGFA, PDGFB and/or PDGFC leads to receptor dimerization, where both PDGFRA homodimers and heterodimers with PDGFRB are observed. Interacts (tyrosine phosphorylated) with SHB (via SH2 domain). Interacts (tyrosine phosphorylated) with SHF (via SH2 domain). Interacts (tyrosine phosphorylated) with SRC (via SH2 domain). Interacts (tyrosine phosphorylated) with PIK3R1. Interacts (tyrosine phosphorylated) with PLCG1 (via SH2 domain). Interacts (tyrosine phosphorylated) with CRK, GRB2 and GRB7. Interacts with CD248; this interaction promotes PDGF receptor signaling pathway. Post-translationally, ubiquitinated, leading to its internalization and degradation. Autophosphorylated on tyrosine residues upon ligand binding. Autophosphorylation occurs in trans, i.e. one subunit of the dimeric receptor phosphorylates tyrosine residues on the other subunit. Phosphorylation at Tyr-730 and Tyr-741 is important for interaction with PIK3R1. Phosphorylation at Tyr-719 and Tyr-753 is important for interaction with PTPN11. Phosphorylation at Tyr-761 is important for interaction with CRK. Phosphorylation at Tyr-571 and Tyr-573 is important for interaction with SRC and SRC family members. Phosphorylation at Tyr-987 and Tyr-1017 is important for interaction with PLCG1.

It is found in the cell membrane. The protein localises to the cell projection. It localises to the cilium. The protein resides in the golgi apparatus. The enzyme catalyses L-tyrosyl-[protein] + ATP = O-phospho-L-tyrosyl-[protein] + ADP + H(+). Present in an inactive conformation in the absence of bound ligand. Binding of PDGFA and/or PDGFB leads to dimerization and activation by autophosphorylation on tyrosine residues. Inhibited by imatinib, nilotinib and sorafenib. Tyrosine-protein kinase that acts as a cell-surface receptor for PDGFA, PDGFB and PDGFC and plays an essential role in the regulation of embryonic development, cell proliferation, survival and chemotaxis. Depending on the context, promotes or inhibits cell proliferation and cell migration. Plays an important role in the differentiation of bone marrow-derived mesenchymal stem cells. Required for normal skeleton development and cephalic closure during embryonic development. Required for normal development of the mucosa lining the gastrointestinal tract, and for recruitment of mesenchymal cells and normal development of intestinal villi. Plays a role in cell migration and chemotaxis in wound healing. Plays a role in platelet activation, secretion of agonists from platelet granules, and in thrombin-induced platelet aggregation. Binding of its cognate ligands - homodimeric PDGFA, homodimeric PDGFB, heterodimers formed by PDGFA and PDGFB or homodimeric PDGFC -leads to the activation of several signaling cascades; the response depends on the nature of the bound ligand and is modulated by the formation of heterodimers between PDGFRA and PDGFRB. Phosphorylates PIK3R1, PLCG1, and PTPN11. Activation of PLCG1 leads to the production of the cellular signaling molecules diacylglycerol and inositol 1,4,5-trisphosphate, mobilization of cytosolic Ca(2+) and the activation of protein kinase C. Phosphorylates PIK3R1, the regulatory subunit of phosphatidylinositol 3-kinase, and thereby mediates activation of the AKT1 signaling pathway. Mediates activation of HRAS and of the MAP kinases MAPK1/ERK2 and/or MAPK3/ERK1. Promotes activation of STAT family members STAT1, STAT3 and STAT5A and/or STAT5B. Receptor signaling is down-regulated by protein phosphatases that dephosphorylate the receptor and its down-stream effectors, and by rapid internalization of the activated receptor. The polypeptide is Platelet-derived growth factor receptor alpha (Pdgfra) (Rattus norvegicus (Rat)).